Here is a 388-residue protein sequence, read N- to C-terminus: MKRAIIIVLDSVGMGELPDAAKYGDEGSNTLGNIAKNLPDFSLPNLESLGLGNIDGMTGYEPSKNPLGSYGRMAEKSAGKDTTTGHWEIAGLILDKPFPVYPNGFPEDIIKRFEDSIGTKTLGNVPASGTEIIKLLGDEHVKTGYPIVYTSADSVFQIAAHENVIPVERLYDMCRTARNILTGEHAVGRVIARPFIGESGNYKRTDRRKDFSLAPVGKTLLDYAVENGYKVKAVGKIEDIFGGRGITESVHIHDNMDGVDRTLEYMRDDFEGILFTNLVDFDMLYGHRNDIAGYANALKEFDRRIPEILANLREDDLLVITADHGCDPSTESTDHSREYVPLLVYGKKFKSNVNLGTRSTFADVAKTVAHYLGISSNLEGESFLGSIL.

Mn(2+) contacts are provided by aspartate 10, aspartate 282, histidine 287, aspartate 323, histidine 324, and histidine 335.

Belongs to the phosphopentomutase family. The cofactor is Mn(2+).

The protein localises to the cytoplasm. It catalyses the reaction 2-deoxy-alpha-D-ribose 1-phosphate = 2-deoxy-D-ribose 5-phosphate. It carries out the reaction alpha-D-ribose 1-phosphate = D-ribose 5-phosphate. It participates in carbohydrate degradation; 2-deoxy-D-ribose 1-phosphate degradation; D-glyceraldehyde 3-phosphate and acetaldehyde from 2-deoxy-alpha-D-ribose 1-phosphate: step 1/2. In terms of biological role, isomerase that catalyzes the conversion of deoxy-ribose 1-phosphate (dRib-1-P) and ribose 1-phosphate (Rib-1-P) to deoxy-ribose 5-phosphate (dRib-5-P) and ribose 5-phosphate (Rib-5-P), respectively. The sequence is that of Phosphopentomutase from Acetivibrio thermocellus (strain ATCC 27405 / DSM 1237 / JCM 9322 / NBRC 103400 / NCIMB 10682 / NRRL B-4536 / VPI 7372) (Clostridium thermocellum).